A 400-amino-acid chain; its full sequence is Probable glycosyltransferase WbjE (400 aa).

The protein belongs to the glycosyltransferase group 1 family. Glycosyltransferase 4 subfamily.

Its pathway is bacterial outer membrane biogenesis; LPS O-antigen biosynthesis. This is Probable glycosyltransferase WbjE (wbjE) from Pseudomonas aeruginosa.